A 358-amino-acid polypeptide reads, in one-letter code: Methionine aminopeptidase 2 (358 aa).

H109 is a binding site for substrate. Positions 130, 141, and 210 each coordinate a divalent metal cation. Position 218 (H218) interacts with substrate. 2 residues coordinate a divalent metal cation: E243 and E339.

The protein belongs to the peptidase M24A family. Methionine aminopeptidase eukaryotic type 2 subfamily. Co(2+) is required as a cofactor. Requires Zn(2+) as cofactor. It depends on Mn(2+) as a cofactor. The cofactor is Fe(2+).

It is found in the cytoplasm. It carries out the reaction Release of N-terminal amino acids, preferentially methionine, from peptides and arylamides.. Cotranslationally removes the N-terminal methionine from nascent proteins. The N-terminal methionine is often cleaved when the second residue in the primary sequence is small and uncharged (Met-Ala-, Cys, Gly, Pro, Ser, Thr, or Val). The protein is Methionine aminopeptidase 2 of Encephalitozoon intestinalis (strain ATCC 50506) (Microsporidian parasite).